An 831-amino-acid polypeptide reads, in one-letter code: Multiphosphoryl transfer protein (831 aa).

One can recognise an HPr domain in the interval 1-90 (MLTIQFLCPL…EYIQVRFIDS (90 aa)). Histidine 15 acts as the Pros-phosphohistidine intermediate; for HPr activity in catalysis. A Phosphohistidine; by EI modification is found at histidine 15. The segment at 119–650 (GNVLASGVGV…AVKSQLRQLD (532 aa)) is PTS EI. Residue histidine 298 is the Tele-phosphohistidine intermediate; for PTS EI activity of the active site. Histidine 298 carries the phosphohistidine; by autocatalysis modification. Positions 405 and 441 each coordinate phosphoenolpyruvate. The Mg(2+) site is built by glutamate 540 and aspartate 564. Phosphoenolpyruvate-binding positions include 563–564 (ND) and arginine 574. Cysteine 611 serves as the catalytic Proton donor; for EI activity. Positions 685 to 828 (PLLALENIFV…QSILTLLETE (144 aa)) constitute a PTS EIIA type-2 domain. The Tele-phosphohistidine intermediate; for PTS EIIA activity role is filled by histidine 747. Phosphohistidine; by HPr is present on histidine 747.

This sequence belongs to the PEP-utilizing enzyme family. Mg(2+) is required as a cofactor.

The protein resides in the cytoplasm. The enzyme catalyses L-histidyl-[protein] + phosphoenolpyruvate = N(pros)-phospho-L-histidyl-[protein] + pyruvate. The catalysed reaction is D-fructose(out) + N(pros)-phospho-L-histidyl-[protein] = D-fructose 1-phosphate(in) + L-histidyl-[protein]. Its function is as follows. Multifunctional protein that includes general (non sugar-specific) and sugar-specific components of the phosphoenolpyruvate-dependent sugar phosphotransferase system (sugar PTS). This major carbohydrate active transport system catalyzes the phosphorylation of incoming sugar substrates concomitantly with their translocation across the cell membrane. The enzyme II FryABC PTS system is involved in fructose transport. The polypeptide is Multiphosphoryl transfer protein (fryA) (Escherichia coli O157:H7).